The sequence spans 292 residues: Lipoyl synthase (292 aa).

The [4Fe-4S] cluster site is built by cysteine 34, cysteine 39, cysteine 45, cysteine 60, cysteine 64, cysteine 67, and serine 273. Residues tryptophan 46–leucine 262 enclose the Radical SAM core domain.

The protein belongs to the radical SAM superfamily. Lipoyl synthase family. [4Fe-4S] cluster serves as cofactor.

It is found in the cytoplasm. The catalysed reaction is [[Fe-S] cluster scaffold protein carrying a second [4Fe-4S](2+) cluster] + N(6)-octanoyl-L-lysyl-[protein] + 2 oxidized [2Fe-2S]-[ferredoxin] + 2 S-adenosyl-L-methionine + 4 H(+) = [[Fe-S] cluster scaffold protein] + N(6)-[(R)-dihydrolipoyl]-L-lysyl-[protein] + 4 Fe(3+) + 2 hydrogen sulfide + 2 5'-deoxyadenosine + 2 L-methionine + 2 reduced [2Fe-2S]-[ferredoxin]. It participates in protein modification; protein lipoylation via endogenous pathway; protein N(6)-(lipoyl)lysine from octanoyl-[acyl-carrier-protein]: step 2/2. Functionally, catalyzes the radical-mediated insertion of two sulfur atoms into the C-6 and C-8 positions of the octanoyl moiety bound to the lipoyl domains of lipoate-dependent enzymes, thereby converting the octanoylated domains into lipoylated derivatives. The protein is Lipoyl synthase of Ehrlichia ruminantium (strain Welgevonden).